Consider the following 198-residue polypeptide: dTTP/UTP pyrophosphatase (198 aa).

The active-site Proton acceptor is the Asp-69.

The protein belongs to the Maf family. YhdE subfamily. A divalent metal cation is required as a cofactor.

The protein localises to the cytoplasm. It catalyses the reaction dTTP + H2O = dTMP + diphosphate + H(+). It carries out the reaction UTP + H2O = UMP + diphosphate + H(+). Nucleoside triphosphate pyrophosphatase that hydrolyzes dTTP and UTP. May have a dual role in cell division arrest and in preventing the incorporation of modified nucleotides into cellular nucleic acids. The sequence is that of dTTP/UTP pyrophosphatase from Idiomarina loihiensis (strain ATCC BAA-735 / DSM 15497 / L2-TR).